We begin with the raw amino-acid sequence, 217 residues long: Probable transaldolase (217 aa).

Residue Lys-85 is the Schiff-base intermediate with substrate of the active site.

It belongs to the transaldolase family. Type 3B subfamily.

The protein localises to the cytoplasm. The enzyme catalyses D-sedoheptulose 7-phosphate + D-glyceraldehyde 3-phosphate = D-erythrose 4-phosphate + beta-D-fructose 6-phosphate. It participates in carbohydrate degradation; pentose phosphate pathway; D-glyceraldehyde 3-phosphate and beta-D-fructose 6-phosphate from D-ribose 5-phosphate and D-xylulose 5-phosphate (non-oxidative stage): step 2/3. In terms of biological role, transaldolase is important for the balance of metabolites in the pentose-phosphate pathway. The polypeptide is Probable transaldolase (Lachnoclostridium phytofermentans (strain ATCC 700394 / DSM 18823 / ISDg) (Clostridium phytofermentans)).